Here is a 682-residue protein sequence, read N- to C-terminus: Glutamine--fructose-6-phosphate aminotransferase [isomerizing] 2 (682 aa).

The active-site For GATase activity is the C2. One can recognise a Glutamine amidotransferase type-2 domain in the interval 2 to 288; sequence CGIFAYMNYR…DDDIAAVADG (287 aa). S244 carries the phosphoserine modification. 2 SIS domains span residues 360–499 and 531–672; these read HLKE…DRIS and LALE…VDFP. Substrate contacts are provided by residues 377-378, 422-424, T427, and H578; these read TS and SQS.

The catalysed reaction is D-fructose 6-phosphate + L-glutamine = D-glucosamine 6-phosphate + L-glutamate. The protein operates within nucleotide-sugar biosynthesis; UDP-N-acetyl-alpha-D-glucosamine biosynthesis; alpha-D-glucosamine 6-phosphate from D-fructose 6-phosphate: step 1/1. In terms of biological role, controls the flux of glucose into the hexosamine pathway. Most likely involved in regulating the availability of precursors for N- and O-linked glycosylation of proteins. This is Glutamine--fructose-6-phosphate aminotransferase [isomerizing] 2 (Gfpt2) from Mus musculus (Mouse).